The following is a 132-amino-acid chain: ATP synthase epsilon chain (132 aa).

This sequence belongs to the ATPase epsilon chain family. F-type ATPases have 2 components, CF(1) - the catalytic core - and CF(0) - the membrane proton channel. CF(1) has five subunits: alpha(3), beta(3), gamma(1), delta(1), epsilon(1). CF(0) has three main subunits: a, b and c.

The protein resides in the cell membrane. In terms of biological role, produces ATP from ADP in the presence of a proton gradient across the membrane. The chain is ATP synthase epsilon chain from Brevibacillus brevis (strain 47 / JCM 6285 / NBRC 100599).